The chain runs to 97 residues: Peptide YY-A (97 aa).

The N-terminal stretch at 1–28 is a signal peptide; sequence MAVMLKPWTVVATVLICVLLCLGTFVDA. Y64 carries the tyrosine amide modification. A propeptide spans 68 to 97 (C-terminal extension); sequence STSEDVMAELLFGDDTEHKQRSRYDDSFMW.

This sequence belongs to the NPY family. As to expression, mainly expressed in brainstem neurons, and in the telencephalon. Also expressed in intestinal endocrine cells.

The protein resides in the secreted. The polypeptide is Peptide YY-A (pyya) (Danio rerio (Zebrafish)).